The following is a 276-amino-acid chain: MAAPTAIRKSTEKSGINEQIQENSTLQSNQALDQNNDDEDMLIDTNAIPTTTVEDQDQSEPSNSLTIQQGETTELQLDESGKPKFSAASKSNMKVKLESRKVAVPPHRMTPLKNVWSKIYPPLVEHLKLQVRMNLKTKTVELRTNKYTTDVGALQKGADFVKAFTLGFDVDDAIALLRLDDLYIETFEIKDVKTLTGDHLSRAIGRIAGKDGKTKFAIENATRTRIVLADSKIHILGGFTHIRMAREAVVSLILGSPPGKVYGNLRTVASRMKERY.

Disordered regions lie at residues 1–39 (MAAPTAIRKSTEKSGINEQIQENSTLQSNQALDQNNDDE) and 51–92 (TTVE…SKSN). Polar residues-rich tracts occupy residues 13–34 (KSGINEQIQENSTLQSNQALDQ) and 51–75 (TTVEDQDQSEPSNSLTIQQGETTEL). Positions 197 to 249 (GDHLSRAIGRIAGKDGKTKFAIENATRTRIVLADSKIHILGGFTHIRMAREAV) constitute a KH domain.

This sequence belongs to the PNO1 family. Component of the small ribosomal subunit, ribosomal RNA processing complex (SSU RRP complex).

Its subcellular location is the cytoplasm. The protein localises to the nucleus. It is found in the nucleolus. Functionally, required for small ribosomal subunit (SSU) synthesis. Has a role in the processing of early nucleolar and late cytoplasmic pre-RNA species. The chain is Pre-rRNA-processing protein PNO1 (PNO1) from Candida albicans (strain SC5314 / ATCC MYA-2876) (Yeast).